The following is a 182-amino-acid chain: UPF0301 protein MCA0413 1 (182 aa).

The protein belongs to the UPF0301 (AlgH) family.

The sequence is that of UPF0301 protein MCA0413 1 from Methylococcus capsulatus (strain ATCC 33009 / NCIMB 11132 / Bath).